The chain runs to 517 residues: Ribonuclease Y (517 aa).

The chain crosses the membrane as a helical span at residues 1–21 (MIESLIALIAAIVGLGIGYLV). The 67-residue stretch at 207–273 (LINVINIKND…TKVIELLVED (67 aa)) folds into the KH domain. In terms of domain architecture, HD spans 333–426 (ALAHSLEVAH…VCAADTLSAA (94 aa)).

Belongs to the RNase Y family.

Its subcellular location is the cell membrane. Endoribonuclease that initiates mRNA decay. The sequence is that of Ribonuclease Y from Campylobacter jejuni subsp. doylei (strain ATCC BAA-1458 / RM4099 / 269.97).